The primary structure comprises 626 residues: Trehalase (626 aa).

The next 2 helical transmembrane spans lie at 20 to 40 and 45 to 65; these read KLFL…FIYL and SLFF…MLDS. Alpha,alpha-trehalose-binding residues include Arg224, Asp232, Asn268, Arg277, Gln279, Arg344, and Glu346. Active-site proton donor/acceptor residues include Asp380 and Glu580. Glu580 and Glu595 together coordinate alpha,alpha-trehalose.

The protein belongs to the glycosyl hydrolase 37 family. As to quaternary structure, forms homodimers. In terms of tissue distribution, highly expressed in flowers. Expressed at low levels in leaves and stems. Expressed in guard cells.

It localises to the cell membrane. Its subcellular location is the cytoplasm. The protein resides in the nucleus. It catalyses the reaction alpha,alpha-trehalose + H2O = alpha-D-glucose + beta-D-glucose. Its function is as follows. Involved in the regulation of trehalose content by hydrolyzing trehalose to glucose. May play a role in the regulation of abscisic acid-induced stomatal closure in response to drought stress. The chain is Trehalase (TRE1) from Arabidopsis thaliana (Mouse-ear cress).